The following is a 442-amino-acid chain: Trigger factor (442 aa).

A PPIase FKBP-type domain is found at 165 to 250; that stretch reads DDRVIIDFEG…LQKVMAPELP (86 aa).

The protein belongs to the FKBP-type PPIase family. Tig subfamily.

Its subcellular location is the cytoplasm. It carries out the reaction [protein]-peptidylproline (omega=180) = [protein]-peptidylproline (omega=0). In terms of biological role, involved in protein export. Acts as a chaperone by maintaining the newly synthesized protein in an open conformation. Functions as a peptidyl-prolyl cis-trans isomerase. This chain is Trigger factor, found in Coxiella burnetii (strain CbuK_Q154) (Coxiella burnetii (strain Q154)).